A 200-amino-acid polypeptide reads, in one-letter code: UPF0301 protein BR0480/BS1330_I0481 (200 aa).

This sequence belongs to the UPF0301 (AlgH) family.

The polypeptide is UPF0301 protein BR0480/BS1330_I0481 (Brucella suis biovar 1 (strain 1330)).